The primary structure comprises 805 residues: Leucine--tRNA ligase (805 aa).

The short motif at 40-51 (PYPSGQGLHVGH) is the 'HIGH' region element. The 'KMSKS' region signature appears at 577–581 (KMSKS). K580 is an ATP binding site.

The protein belongs to the class-I aminoacyl-tRNA synthetase family.

It is found in the cytoplasm. It carries out the reaction tRNA(Leu) + L-leucine + ATP = L-leucyl-tRNA(Leu) + AMP + diphosphate. The polypeptide is Leucine--tRNA ligase (Limosilactobacillus fermentum (strain NBRC 3956 / LMG 18251) (Lactobacillus fermentum)).